Consider the following 142-residue polypeptide: Large ribosomal subunit protein uL11 (142 aa).

The protein belongs to the universal ribosomal protein uL11 family. In terms of assembly, part of the ribosomal stalk of the 50S ribosomal subunit. Interacts with L10 and the large rRNA to form the base of the stalk. L10 forms an elongated spine to which L12 dimers bind in a sequential fashion forming a multimeric L10(L12)X complex. One or more lysine residues are methylated.

Its function is as follows. Forms part of the ribosomal stalk which helps the ribosome interact with GTP-bound translation factors. The sequence is that of Large ribosomal subunit protein uL11 from Baumannia cicadellinicola subsp. Homalodisca coagulata.